Reading from the N-terminus, the 189-residue chain is dCTP deaminase, dUMP-forming (189 aa).

DCTP-binding positions include 101-106 (KSSLGR), Asp-119, 127-129 (TLE), Gln-148, Tyr-162, Lys-170, and Gln-174. Residue Glu-129 is the Proton donor/acceptor of the active site. Residues 163-189 (GSGKLGSKYQGQRGPTPSKAYLNFPNK) form a disordered region.

It belongs to the dCTP deaminase family. In terms of assembly, homotrimer.

It catalyses the reaction dCTP + 2 H2O = dUMP + NH4(+) + diphosphate. Its pathway is pyrimidine metabolism; dUMP biosynthesis; dUMP from dCTP: step 1/1. Bifunctional enzyme that catalyzes both the deamination of dCTP to dUTP and the hydrolysis of dUTP to dUMP without releasing the toxic dUTP intermediate. The polypeptide is dCTP deaminase, dUMP-forming (Corynebacterium glutamicum (strain R)).